The chain runs to 239 residues: 4-hydroxy-tetrahydrodipicolinate reductase (239 aa).

Residues 8-13 (GSTGKM), 78-80 (GTT), and 102-105 (SANM) contribute to the NAD(+) site. Histidine 134 serves as the catalytic Proton donor/acceptor. Histidine 135 is a binding site for (S)-2,3,4,5-tetrahydrodipicolinate. The Proton donor role is filled by lysine 138. A (S)-2,3,4,5-tetrahydrodipicolinate-binding site is contributed by 144 to 145 (GT).

Belongs to the DapB family.

The protein localises to the cytoplasm. It catalyses the reaction (S)-2,3,4,5-tetrahydrodipicolinate + NAD(+) + H2O = (2S,4S)-4-hydroxy-2,3,4,5-tetrahydrodipicolinate + NADH + H(+). It carries out the reaction (S)-2,3,4,5-tetrahydrodipicolinate + NADP(+) + H2O = (2S,4S)-4-hydroxy-2,3,4,5-tetrahydrodipicolinate + NADPH + H(+). Its pathway is amino-acid biosynthesis; L-lysine biosynthesis via DAP pathway; (S)-tetrahydrodipicolinate from L-aspartate: step 4/4. In terms of biological role, catalyzes the conversion of 4-hydroxy-tetrahydrodipicolinate (HTPA) to tetrahydrodipicolinate. The sequence is that of 4-hydroxy-tetrahydrodipicolinate reductase from Rickettsia conorii (strain ATCC VR-613 / Malish 7).